A 739-amino-acid chain; its full sequence is BEL1-like homeodomain protein 2 (739 aa).

Disordered regions lie at residues 23-73 and 143-222; these read SQDY…ESSV and LMNP…NSQT. Polar residues predominate over residues 41–58; that stretch reads NFSNGFDRSDSPNLTTQQ. Residues 145-155 are compositionally biased toward pro residues; it reads NPPPPQQPPSP. The segment covering 179 to 190 has biased composition (low complexity); it reads TNTTHHQNYTNH. Positions 316–332 are SR/KY domain; that stretch reads SRYTTAAQELLEEFCSV. The interval 341 to 378 is disordered; the sequence is KLGNSSNPNTCGGDGGGSSPSSAGANKEHPPLSASDRI. Residues 376-447 form a BELL domain region; that stretch reads DRIEHQRRKV…CLKDAVAAQL (72 aa). The segment at residues 498 to 560 is a DNA-binding region (homeobox); sequence AWRPQRGLPE…NARVRLWKPM (63 aa). Positions 567–627 are disordered; that stretch reads QESKEREREE…TAPDASDADA (61 aa). Acidic residues predominate over residues 576–585; that stretch reads EELEENEEDQ. Over residues 586 to 596 the composition is skewed to basic and acidic residues; the sequence is ETKNSNDDKST. The segment covering 597-627 has biased composition (low complexity); that stretch reads KSNNNESNFTAVRTTSQTPTTTAPDASDADA.

Belongs to the TALE/BELL homeobox family. In terms of assembly, may form heterodimeric complexes with TALE/KNOX proteins STM, KNAT1/BP, KNAT2 and KNAT5. Interacts with OFP1, OFP2, OFP4 and OFP5. Interacts with KNATM, isoform KNATM-B. In terms of tissue distribution, expressed in lateral organs.

The protein localises to the nucleus. In terms of biological role, transcription factor that establishes leaf shape by repressing growth in specific subdomains of the leaf. Negatively regulates knox homeobox gene KNAT1/BP expression. This Arabidopsis thaliana (Mouse-ear cress) protein is BEL1-like homeodomain protein 2 (BLH2).